Here is a 107-residue protein sequence, read N- to C-terminus: Sperm protamine P1 (107 aa).

Basic and acidic residues-rich tracts occupy residues 1–10 and 20–33; these read ALRKVDRNRF and REAK…EFPG. The propeptide at 1-35 is removed in mature form; the sequence is ALRKVDRNRFVLDNVTPQPREAKRYKEEEEFPGHG. Positions 1-107 are disordered; the sequence is ALRKVDRNRF…RRRRRGKKGK (107 aa). Positions 34 to 107 are enriched in basic residues; that stretch reads HGRRRRRRSK…RRRRRGKKGK (74 aa). Phosphoserine is present on Ser42.

Post-translationally, a series of N-terminal cleavages yield the mature protein. In terms of processing, only the mature protein is phosphorylated. As to expression, gonads.

The protein resides in the nucleus. The protein localises to the chromosome. Functionally, protamines substitute for histones in the chromatin of sperm during the haploid phase of spermatogenesis. They compact sperm DNA into a highly condensed, stable and inactive complex. This is Sperm protamine P1 from Bolinus brandaris (Purple dye murex).